A 320-amino-acid chain; its full sequence is Cytochrome f (320 aa).

A signal peptide spans 1 to 35 (MQNRNTFSWVKEQMTRSIFVSMMIYIITRASISNA). The heme site is built by Tyr36, Cys56, Cys59, and His60. The chain crosses the membrane as a helical span at residues 286 to 306 (IQGLFLFLASVILAQIFLVLK).

It belongs to the cytochrome f family. The 4 large subunits of the cytochrome b6-f complex are cytochrome b6, subunit IV (17 kDa polypeptide, petD), cytochrome f and the Rieske protein, while the 4 small subunits are PetG, PetL, PetM and PetN. The complex functions as a dimer. Requires heme as cofactor.

It is found in the plastid. Its subcellular location is the chloroplast thylakoid membrane. In terms of biological role, component of the cytochrome b6-f complex, which mediates electron transfer between photosystem II (PSII) and photosystem I (PSI), cyclic electron flow around PSI, and state transitions. The polypeptide is Cytochrome f (Amborella trichopoda).